The following is a 177-amino-acid chain: Large ribosomal subunit protein uL6 (177 aa).

The protein belongs to the universal ribosomal protein uL6 family. As to quaternary structure, part of the 50S ribosomal subunit.

This protein binds to the 23S rRNA, and is important in its secondary structure. It is located near the subunit interface in the base of the L7/L12 stalk, and near the tRNA binding site of the peptidyltransferase center. This is Large ribosomal subunit protein uL6 from Marinomonas sp. (strain MWYL1).